The primary structure comprises 437 residues: Trigger factor (437 aa).

One can recognise a PPIase FKBP-type domain in the interval glycine 163–proline 248.

It belongs to the FKBP-type PPIase family. Tig subfamily.

Its subcellular location is the cytoplasm. It catalyses the reaction [protein]-peptidylproline (omega=180) = [protein]-peptidylproline (omega=0). Involved in protein export. Acts as a chaperone by maintaining the newly synthesized protein in an open conformation. Functions as a peptidyl-prolyl cis-trans isomerase. The sequence is that of Trigger factor (tig) from Neisseria meningitidis serogroup B (strain ATCC BAA-335 / MC58).